The sequence spans 415 residues: Peptide chain release factor subunit 1 (415 aa).

The protein belongs to the eukaryotic release factor 1 family. As to quaternary structure, heterodimer of two subunits, one of which binds GTP.

It is found in the cytoplasm. In terms of biological role, directs the termination of nascent peptide synthesis (translation) in response to the termination codons UAA, UAG and UGA. The sequence is that of Peptide chain release factor subunit 1 from Thermococcus sibiricus (strain DSM 12597 / MM 739).